The following is a 1489-amino-acid chain: Type-2 histone deacetylase 1 (1489 aa).

4 stretches are compositionally biased toward low complexity: residues 135–163 (NNNN…SPSG), 190–259 (SNGN…SRNL), 281–306 (NIIN…TSTT), and 325–399 (SPTS…NINN). Disordered regions lie at residues 135–259 (NNNN…SRNL), 281–556 (NIIN…NYQQ), 915–935 (NNNN…DDQL), 955–1024 (NISK…RDRD), and 1151–1185 (STGI…GEQC). The span at 400–430 (VANGTPRPSLQTSRLQGKLPSPQQYNTSPSH) shows a compositional bias: polar residues. 4 stretches are compositionally biased toward low complexity: residues 431-450 (QQYP…PIQS), 486-553 (NNNN…NNSN), 915-928 (NNNN…NNNN), and 959-988 (NNNN…NNNN). 2 stretches are compositionally biased toward basic and acidic residues: residues 989-1001 (RNRD…ERDN) and 1010-1024 (IEKE…RDRD). The span at 1158-1180 (STSTPITTTGTATVTPGSTTSST) shows a compositional bias: low complexity. The active-site Proton acceptor is the histidine 1232. Acidic residues predominate over residues 1325 to 1335 (EQNDYDDDDNN). A disordered region spans residues 1325 to 1374 (EQNDYDDDDNNNDVNNNNNNNNNNNNNNNNNNNNKNNNNNNSNSITQQST). Low complexity predominate over residues 1336–1367 (NDVNNNNNNNNNNNNNNNNNNNNKNNNNNNSN).

Belongs to the histone deacetylase family. HD type 2 subfamily.

The protein resides in the nucleus. It is found in the cytoplasm. It carries out the reaction N(6)-acetyl-L-lysyl-[histone] + H2O = L-lysyl-[histone] + acetate. In terms of biological role, responsible for the deacetylation of lysine residues on the N-terminal part of the core histones (H2A, H2B, H3 and H4). Histone deacetylation plays an important role in transcriptional regulation, cell cycle progression and developmental events. Histone deacetylases act via the formation of large multiprotein complexes. The protein is Type-2 histone deacetylase 1 (hdaD) of Dictyostelium discoideum (Social amoeba).